We begin with the raw amino-acid sequence, 283 residues long: Lolitrem B biosynthesis cluster protein S (283 aa).

A signal peptide spans 1 to 27; it reads MSRSDWIFISLQGFFCLAGVIWKSREG. 5 helical membrane-spanning segments follow: residues 73–93, 112–132, 157–177, 219–239, and 250–270; these read WFWL…LIIL, LGYL…SLWI, IFWC…VATL, MTGT…ALEA, and VRMF…DVLL.

The protein belongs to the ltmS family.

The protein localises to the membrane. Part of the gene cluster that mediates the biosynthesis of lolitrems, indole-diterpene mycotoxins that are potent tremorgens in mammals, and are synthesized by clavicipitaceous fungal endophytes in association with their grass hosts. The geranylgeranyl diphosphate (GGPP) synthase ltmG is proposed to catalyze the first step in lolitrem biosynthesis. LtmG catalyzes a series of iterative condensations of isopentenyl diphosphate (IPP) with dimethylallyl diphosphate (DMAPP), geranyl diphosphate (GPP), and farnesyl diphosphate (FPP), to form GGPP. GGPP then condenses with indole-3-glycerol phosphate to form 3-geranylgeranylindole, an acyclic intermediate, to be incorporated into paxilline. Either ltmG or ltmC could be responsible for this step, as both are putative prenyl transferases. The FAD-dependent monooxygenase ltmM then catalyzes the epoxidation of the two terminal alkenes of the geranylgeranyl moiety, which is subsequently cyclized by ltmB, to paspaline. The cytochrome P450 monooxygenases ltmQ and ltmP can sequentially oxidize paspaline to terpendole E and terpendole F. Alternatively, ltmP converts paspaline to an intermediate which is oxidized by ltmQ to terpendole F. LtmF, ltmK, ltmE and ltmJ appear to be unique to the epichloe endophytes. The prenyltransferase ltmF is involved in the 27-hydroxyl-O-prenylation. The cytochrome P450 monooxygenase ltmK is required for the oxidative acetal ring formation. The multi-functional prenyltransferase ltmE is required for C20- and C21-prenylations of the indole ring of paspalanes and acts together with the cytochrome P450 monooxygenase ltmJ to yield lolitremanes by multiple oxidations and ring closures. The stereoisomer pairs of lolitriol and lolitrem N or lolitrem B and lolitrem F may be attributed to variations in the way in which ring closure can occur under the action of ltmJ. While the major product of this pathway is lolitrem B, the prenyl transferases and cytochrome P450 monooxygenases identified in this pathway have a remarkable versatility in their regio- and stereo-specificities to generate a diverse range of metabolites that are products of a metabolic grid rather than a linear pathway. This Epichloe festucae (strain Fl1) protein is Lolitrem B biosynthesis cluster protein S.